A 246-amino-acid polypeptide reads, in one-letter code: Eukaryotic translation initiation factor 6 (246 aa).

It belongs to the eIF-6 family. As to quaternary structure, monomer. Associates with the 60S ribosomal subunit.

It localises to the cytoplasm. Its subcellular location is the nucleus. The protein localises to the nucleolus. Its function is as follows. Binds to the 60S ribosomal subunit and prevents its association with the 40S ribosomal subunit to form the 80S initiation complex in the cytoplasm. May also be involved in ribosome biogenesis. Involved in miRNA-mediated gene silencing. This Caenorhabditis elegans protein is Eukaryotic translation initiation factor 6.